Here is a 380-residue protein sequence, read N- to C-terminus: Chaperone protein DnaJ (380 aa).

The 66-residue stretch at 6–71 folds into the J domain; that stretch reads DYYAILEVSR…QKRAAYDQYG (66 aa). The CR-type zinc-finger motif lies at 136–215; the sequence is GVKKDVRVIT…CHGEGTVEKE (80 aa). Zn(2+) is bound by residues Cys149, Cys152, Cys167, Cys170, Cys189, Cys192, Cys203, and Cys206. CXXCXGXG motif repeat units follow at residues 149–156, 167–174, 189–196, and 203–210; these read CEACHGTG, CPSCHGAG, CPTCHGAG, and CKVCHGEG.

The protein belongs to the DnaJ family. In terms of assembly, homodimer. The cofactor is Zn(2+).

The protein resides in the cytoplasm. Participates actively in the response to hyperosmotic and heat shock by preventing the aggregation of stress-denatured proteins and by disaggregating proteins, also in an autonomous, DnaK-independent fashion. Unfolded proteins bind initially to DnaJ; upon interaction with the DnaJ-bound protein, DnaK hydrolyzes its bound ATP, resulting in the formation of a stable complex. GrpE releases ADP from DnaK; ATP binding to DnaK triggers the release of the substrate protein, thus completing the reaction cycle. Several rounds of ATP-dependent interactions between DnaJ, DnaK and GrpE are required for fully efficient folding. Also involved, together with DnaK and GrpE, in the DNA replication of plasmids through activation of initiation proteins. This Acetobacter pasteurianus (strain NBRC 105184 / IFO 3283-01) protein is Chaperone protein DnaJ.